A 417-amino-acid chain; its full sequence is MSRRYLFTSESVTEGHPDKICDQISDAILDAVLAADPSSRVAAEVVTNTGLVLITGELTTQANVNFIQVARQKIKEIGYTNADNGFSANSCSVMVALDEQSPDIAQGVTSAQEQRDKLSDDQLDEIGAGDQGLMFGYACNETPEFMPLPISLAHRLSLKLSQVRKSGELPYLGPDGKTQVTVIYEDGKPVGIDTILISTQHTETIGALTDNTEIQAKIKADLLEKVIKPVFVGATVGLSDSTKFLVNPTGKFVIGGPQGDSGLTGRKIIIDTYGGYSRHGGGAFSGKDPTKVDRSASYACRYVAKNIVAAGLAEKCEVQVSYAIGVARPVSVMIETFGTCTVDEDRLLEVVQKHFELRPAGIIQAFDLRNLPSQRNGRFYQDMAAYGHFGRTDLDLPWERLDKVDILKQELATATVA.

Position 16 (His16) interacts with ATP. Position 18 (Asp18) interacts with Mg(2+). Glu44 is a binding site for K(+). L-methionine-binding residues include Glu57 and Gln100. The flexible loop stretch occupies residues 100 to 110 (QSPDIAQGVTS). Residues 175–177 (DGK), 251–252 (KF), Asp260, 266–267 (RK), Ala283, and Lys287 each bind ATP. Asp260 contributes to the L-methionine binding site. Lys291 contacts L-methionine.

Belongs to the AdoMet synthase family. As to quaternary structure, homotetramer; dimer of dimers. Requires Mg(2+) as cofactor. K(+) is required as a cofactor.

The protein localises to the cytoplasm. The enzyme catalyses L-methionine + ATP + H2O = S-adenosyl-L-methionine + phosphate + diphosphate. It functions in the pathway amino-acid biosynthesis; S-adenosyl-L-methionine biosynthesis; S-adenosyl-L-methionine from L-methionine: step 1/1. Catalyzes the formation of S-adenosylmethionine (AdoMet) from methionine and ATP. The overall synthetic reaction is composed of two sequential steps, AdoMet formation and the subsequent tripolyphosphate hydrolysis which occurs prior to release of AdoMet from the enzyme. This Picosynechococcus sp. (strain ATCC 27264 / PCC 7002 / PR-6) (Agmenellum quadruplicatum) protein is S-adenosylmethionine synthase.